The following is a 324-amino-acid chain: Lactonase drp35 (324 aa).

Ca(2+) contacts are provided by E47, S109, G111, D129, T132, Y134, D137, N184, D235, and S236. D235 serves as the catalytic Proton donor.

Belongs to the SMP-30/CGR1 family. It depends on Ca(2+) as a cofactor.

Its subcellular location is the cytoplasm. Its function is as follows. Exhibits lactonase activity. Acts in cells with perturbed membrane integrity and is possibly related to the membrane homeostasis. In Staphylococcus aureus (strain MRSA252), this protein is Lactonase drp35 (drp35).